A 670-amino-acid polypeptide reads, in one-letter code: UvrABC system protein B (670 aa).

The region spanning Glu26–Arg414 is the Helicase ATP-binding domain. An ATP-binding site is contributed by Gly39–Thr46. The Beta-hairpin signature appears at Tyr92–Val115. A Helicase C-terminal domain is found at Gln431 to Leu597. Residues Glu630 to Gln665 form the UVR domain.

The protein belongs to the UvrB family. As to quaternary structure, forms a heterotetramer with UvrA during the search for lesions. Interacts with UvrC in an incision complex.

It is found in the cytoplasm. Functionally, the UvrABC repair system catalyzes the recognition and processing of DNA lesions. A damage recognition complex composed of 2 UvrA and 2 UvrB subunits scans DNA for abnormalities. Upon binding of the UvrA(2)B(2) complex to a putative damaged site, the DNA wraps around one UvrB monomer. DNA wrap is dependent on ATP binding by UvrB and probably causes local melting of the DNA helix, facilitating insertion of UvrB beta-hairpin between the DNA strands. Then UvrB probes one DNA strand for the presence of a lesion. If a lesion is found the UvrA subunits dissociate and the UvrB-DNA preincision complex is formed. This complex is subsequently bound by UvrC and the second UvrB is released. If no lesion is found, the DNA wraps around the other UvrB subunit that will check the other stand for damage. This chain is UvrABC system protein B, found in Pectobacterium atrosepticum (strain SCRI 1043 / ATCC BAA-672) (Erwinia carotovora subsp. atroseptica).